We begin with the raw amino-acid sequence, 186 residues long: ATP-dependent protease subunit HslV (186 aa).

T14 is a catalytic residue. 3 residues coordinate Na(+): A168, C171, and T174.

This sequence belongs to the peptidase T1B family. HslV subfamily. As to quaternary structure, a double ring-shaped homohexamer of HslV is capped on each side by a ring-shaped HslU homohexamer. The assembly of the HslU/HslV complex is dependent on binding of ATP.

The protein localises to the cytoplasm. The catalysed reaction is ATP-dependent cleavage of peptide bonds with broad specificity.. Its activity is regulated as follows. Allosterically activated by HslU binding. In terms of biological role, protease subunit of a proteasome-like degradation complex believed to be a general protein degrading machinery. The chain is ATP-dependent protease subunit HslV from Bradyrhizobium sp. (strain ORS 278).